The primary structure comprises 396 residues: MAKEKFERSKPHVNVGTIGHVDHGKTTLTAALTIVQGKKFGGDSKDYASIDNAPEERERGITISTAHVEYESETRHYAHVDCPGHADYVKNMITGAAQMDGAILVCSAADGPMPQTREHILLSRQVGVPYIVVYLNKADMVDDEELLELVEMEVRELLDTYDFPGDDTPVIMGSALKAIEGDQSEIGEPSIGRLVDALDSYIPEPTRETDKPFLMPVEDIFSIQGRGTVATGRVETGVVKVGEEIEIVGIRPTTTTTVTGVEMFRKLLDQGEAGDNVGILLRGTKREDIERGQVLAHKGTVTPHTKFEAEVYVLSKDEGGRHTPFFQGYRPQFYFRTTDVTGACELPAGTEMVMPGDNVQMTVELINPIAMNEGLRFAIREGGRTVGAGVVAKIID.

The tr-type G domain maps to 10 to 206 (KPHVNVGTIG…ALDSYIPEPT (197 aa)). Positions 19-26 (GHVDHGKT) are G1. Residue 19 to 26 (GHVDHGKT) participates in GTP binding. T26 serves as a coordination point for Mg(2+). Positions 60–64 (GITIS) are G2. A G3 region spans residues 81 to 84 (DCPG). GTP-binding positions include 81–85 (DCPGH) and 136–139 (NKAD). The G4 stretch occupies residues 136–139 (NKAD). The G5 stretch occupies residues 174 to 176 (SAL).

The protein belongs to the TRAFAC class translation factor GTPase superfamily. Classic translation factor GTPase family. EF-Tu/EF-1A subfamily. As to quaternary structure, monomer.

The protein localises to the cytoplasm. It carries out the reaction GTP + H2O = GDP + phosphate + H(+). Its function is as follows. GTP hydrolase that promotes the GTP-dependent binding of aminoacyl-tRNA to the A-site of ribosomes during protein biosynthesis. The chain is Elongation factor Tu from Hydrogenovibrio crunogenus (strain DSM 25203 / XCL-2) (Thiomicrospira crunogena).